The sequence spans 127 residues: Protein pkiA (127 aa).

One can recognise an HIT domain in the interval 16–127; the sequence is IFAKIISGAI…GGRQMNWPPG (112 aa).

This Dictyostelium discoideum (Social amoeba) protein is Protein pkiA (pkiA).